The following is a 366-amino-acid chain: 5-hydroxytryptamine receptor 1F (366 aa).

Topologically, residues 1–24 are extracellular; the sequence is MDFLNASDQNLTSEELLNRMPSKI. N-linked (GlcNAc...) asparagine glycans are attached at residues Asn-5 and Asn-10. A helical membrane pass occupies residues 25–49; that stretch reads LVSLTLSGLALMTTTINSLVIAAII. Residues 50–59 are Cytoplasmic-facing; the sequence is VTRKLHHPAN. Residues 60–81 form a helical membrane-spanning segment; sequence YLICSLAVTDFLVAVLVMPFSI. The Extracellular portion of the chain corresponds to 82–96; it reads VYIVRESWIMGQVLC. A disulfide bridge links Cys-96 with Cys-172. The chain crosses the membrane as a helical span at residues 97–119; it reads DIWLSVDIICCTCSILHLSAIAL. 2 residues coordinate serotonin: Asp-103 and Cys-107. The DRY motif; important for ligand-induced conformation changes signature appears at 120 to 122; it reads DRY. Topologically, residues 120 to 139 are cytoplasmic; that stretch reads DRYRAITDAVEYARKRTPRH. A helical membrane pass occupies residues 140 to 159; it reads AGIMITIVWVISVFISMPPL. Residues 160–178 lie on the Extracellular side of the membrane; the sequence is FWRHQGTSRDDECVIKHDH. Residues 179 to 202 form a helical membrane-spanning segment; the sequence is IVSTIYSTFGAFYIPLVLILILYY. Topologically, residues 203–291 are cytoplasmic; sequence KIYRAARTLY…KISGTRERKA (89 aa). A helical membrane pass occupies residues 292–315; the sequence is ATTLGLILGAFVICWLPFFVKELV. Residues 316–327 are Extracellular-facing; it reads VNVCEKCKISEE. Residues 328–350 form a helical membrane-spanning segment; it reads MSNFLAWLGYLNSLINPLIYTIF. The NPxxY motif; important for ligand-induced conformation changes and signaling motif lies at 343-347; it reads NPLIY. The Cytoplasmic segment spans residues 351-366; it reads NEDFKKAFQKLVRCRY.

Belongs to the G-protein coupled receptor 1 family. As to expression, detected in hippocampus.

The protein resides in the cell membrane. G-protein coupled receptor for 5-hydroxytryptamine (serotonin). Also functions as a receptor for various alkaloids and psychoactive substances. Ligand binding causes a conformation change that triggers signaling via guanine nucleotide-binding proteins (G proteins) and modulates the activity of downstream effectors, such as adenylate cyclase. HTR1F is coupled to G(i)/G(o) G alpha proteins and mediates inhibitory neurotransmission by inhibiting adenylate cyclase activity. The protein is 5-hydroxytryptamine receptor 1F (Htr1f) of Mus musculus (Mouse).